The primary structure comprises 103 residues: Large ribosomal subunit protein bL21 (103 aa).

It belongs to the bacterial ribosomal protein bL21 family. Part of the 50S ribosomal subunit. Contacts protein L20.

Its function is as follows. This protein binds to 23S rRNA in the presence of protein L20. The polypeptide is Large ribosomal subunit protein bL21 (Histophilus somni (strain 129Pt) (Haemophilus somnus)).